The chain runs to 153 residues: Actin-related protein 2/3 complex subunit 5-like protein (153 aa).

A Phosphoserine modification is found at serine 64.

The protein belongs to the ARPC5 family. May be a component of the Arp2/3 complex in which it may replace ARPC5.

Its subcellular location is the cytoplasm. The protein localises to the cytoskeleton. In terms of biological role, may function as component of the Arp2/3 complex which is involved in regulation of actin polymerization and together with an activating nucleation-promoting factor (NPF) mediates the formation of branched actin networks. The sequence is that of Actin-related protein 2/3 complex subunit 5-like protein (ARPC5L) from Pongo abelii (Sumatran orangutan).